The sequence spans 454 residues: Zeatin O-xylosyltransferase (454 aa).

This sequence belongs to the UDP-glycosyltransferase family. High level in young seeds, less in older seeds and very low in roots.

It catalyses the reaction zeatin + UDP-alpha-D-xylose = O-beta-D-xylosylzeatin + UDP + H(+). In terms of biological role, utilizes UDP-xylose as the sugar donor and catalyzes the formation of o-xylosylzeatin from zeatin. Does not act on UDP-glucose. The chain is Zeatin O-xylosyltransferase from Phaseolus vulgaris (Kidney bean).